The sequence spans 1187 residues: uncharacterized protein (1187 aa).

Disordered regions lie at residues 302 to 405 (QKSQ…KPVG), 419 to 451 (QAFSPLLSSAGPGSPAAETKTEETTLGHGRASK), 511 to 551 (KAPG…LRLE), 1095 to 1134 (KSQRTPQGEQSRNMWAGLLSPEPGQSGDTEEVRGTPKLPD), and 1148 to 1187 (PHLPKQSKASRPTGGSFSSEGTGSQTSLEDSPHTSPPASL). The span at 321 to 333 (LPLSGPAGAPPLG) shows a compositional bias: low complexity. Residues 352–361 (SRRKARHKAS) show a composition bias toward basic residues. Composition is skewed to low complexity over residues 422 to 435 (SPLLSSAGPGSPAA) and 517 to 534 (GTTLPTTSGSGPLSGEPP). A compositionally biased stretch (polar residues) spans 1096–1107 (SQRTPQGEQSRN). Low complexity predominate over residues 1160-1174 (TGGSFSSEGTGSQTS).

This is an uncharacterized protein from Mus musculus (Mouse).